The following is a 435-amino-acid chain: Gamma-glutamyl phosphate reductase (435 aa).

The protein belongs to the gamma-glutamyl phosphate reductase family.

The protein localises to the cytoplasm. The enzyme catalyses L-glutamate 5-semialdehyde + phosphate + NADP(+) = L-glutamyl 5-phosphate + NADPH + H(+). The protein operates within amino-acid biosynthesis; L-proline biosynthesis; L-glutamate 5-semialdehyde from L-glutamate: step 2/2. In terms of biological role, catalyzes the NADPH-dependent reduction of L-glutamate 5-phosphate into L-glutamate 5-semialdehyde and phosphate. The product spontaneously undergoes cyclization to form 1-pyrroline-5-carboxylate. The polypeptide is Gamma-glutamyl phosphate reductase (Synechococcus sp. (strain WH7803)).